A 345-amino-acid chain; its full sequence is Ferrochelatase (345 aa).

Fe cation contacts are provided by His-215 and Glu-296.

It belongs to the ferrochelatase family.

The protein resides in the cytoplasm. The enzyme catalyses heme b + 2 H(+) = protoporphyrin IX + Fe(2+). It functions in the pathway porphyrin-containing compound metabolism; protoheme biosynthesis; protoheme from protoporphyrin-IX: step 1/1. Functionally, catalyzes the ferrous insertion into protoporphyrin IX. The sequence is that of Ferrochelatase from Rhodopseudomonas palustris (strain BisA53).